Here is a 668-residue protein sequence, read N- to C-terminus: Macrolide export ATP-binding/permease protein MacB 1/2 (668 aa).

The ABC transporter domain occupies 9–247; the sequence is IRLRGVGREY…PGPGPAQAPQ (239 aa). 45 to 52 lines the ATP pocket; it reads GASGSGKS. Residues 230–257 form a disordered region; that stretch reads RTGAPAADPGPGPAQAPQPAPQPAPVQA. A compositionally biased stretch (pro residues) spans 237 to 255; that stretch reads DPGPGPAQAPQPAPQPAPV. The next 4 helical transmembrane spans lie at 294–314, 541–561, 598–618, and 634–654; these read FLTMLGIIIGIASVVSVVALG, LALLIAAIAVISLVVGGIGVM, LVCVIGGIAGILAALGFGLAF, and MLAALASACAIGLAFGYLPAV.

It belongs to the ABC transporter superfamily. Macrolide exporter (TC 3.A.1.122) family. In terms of assembly, homodimer.

It is found in the cell inner membrane. In terms of biological role, non-canonical ABC transporter that contains transmembrane domains (TMD), which form a pore in the inner membrane, and an ATP-binding domain (NBD), which is responsible for energy generation. Confers resistance against macrolides. The polypeptide is Macrolide export ATP-binding/permease protein MacB 1/2 (Paracoccus denitrificans (strain Pd 1222)).